The following is a 129-amino-acid chain: Large ribosomal subunit protein bL32m (129 aa).

The transit peptide at 1–63 (MAAMTAAAAA…LEDIWEGILR (63 aa)) directs the protein to the mitochondrion. Zn(2+)-binding residues include cysteine 94, cysteine 97, cysteine 107, and cysteine 110.

It belongs to the bacterial ribosomal protein bL32 family. In terms of assembly, component of the mitochondrial large ribosomal subunit (mt-LSU). Mature N.crassa 74S mitochondrial ribosomes consist of a small (37S) and a large (54S) subunit. The 37S small subunit contains a 16S ribosomal RNA (16S mt-rRNA) and 32 different proteins. The 54S large subunit contains a 23S rRNA (23S mt-rRNA) and 42 different proteins. bL32m has a zinc binding site. MRPL32 precursor is processed by the m-AAA protease (composed of YTA12/RCA1 and YTA10/AFG3), which cleaves the N-terminal transit peptide. Cleavage by the m-AAA protease takes place prior to assembly into the large subunit, an essential step for mitochondrial ribosome (mitoribosome) assembly. Proper processing by the m-AAA protease is dependent on the zinc-binding region within the tightly folded C-terminal domain of MRPL32: zinc-dependent folding halts degradation initiated from the N-terminus and triggers the release of mature MRPL32.

It is found in the mitochondrion. Component of the mitochondrial ribosome (mitoribosome), a dedicated translation machinery responsible for the synthesis of mitochondrial genome-encoded proteins, including at least some of the essential transmembrane subunits of the mitochondrial respiratory chain. The mitoribosomes are attached to the mitochondrial inner membrane and translation products are cotranslationally integrated into the membrane. This chain is Large ribosomal subunit protein bL32m (mrpl32), found in Neurospora crassa (strain ATCC 24698 / 74-OR23-1A / CBS 708.71 / DSM 1257 / FGSC 987).